A 317-amino-acid chain; its full sequence is MKVLWAALLVTFLAGCQAKVEQPVESEPEPELRQQTEWQSGQPWELALGRFWDYLRWVQTLSEQVQEELLSSQVTQELTTLMDETMKELKAYKSDLEEQLSPVAEETRARLSKELQAAQARLGADMEDVRSRLVQYRGEVQAMLGQSTEELRARLASHLRKLRKRLLRDADDLQKRLAVYQAGAREGAERGVSAIRERLGPLVEQGRVRAATVGSLAGQPLQERAQAWGERLRARMEEVGSRTRDRLDEVKEQVAEVRAKLEEQAQQISLQAEAFQARLKSWFEPLVEDMQRQWAGLVEKVQAAVGASTAPVPSDNH.

The signal sequence occupies residues 1 to 18 (MKVLWAALLVTFLAGCQA). A run of 8 repeats spans residues 80–101 (TLMD…EQLS), 102–123 (PVAE…ARLG), 124–145 (ADME…AMLG), 146–167 (QSTE…KRLL), 168–189 (RDAD…EGAE), 190–211 (RGVS…VRAA), 212–233 (TVGS…ERLR), and 234–255 (ARME…EQVA). Positions 80-255 (TLMDETMKEL…RLDEVKEQVA (176 aa)) are 8 X 22 AA approximate tandem repeats. A Methionine sulfoxide modification is found at methionine 143. Phosphoserine is present on serine 147. Residues 158–168 (HLRKLRKRLLR) are LDL and other lipoprotein receptors binding. Residue 162–165 (LRKR) coordinates heparin. Residues 210-290 (AATVGSLAGQ…SWFEPLVEDM (81 aa)) form a lipid-binding and lipoprotein association region. Residue 229-236 (GERLRARM) participates in heparin binding. Positions 266–317 (QQISLQAEAFQARLKSWFEPLVEDMQRQWAGLVEKVQAAVGASTAPVPSDNH) are homooligomerization. The segment at 278 to 290 (RLKSWFEPLVEDM) is specificity for association with VLDL.

Belongs to the apolipoprotein A1/A4/E family. In terms of assembly, homotetramer. May interact with ABCA1; functionally associated with ABCA1 in the biogenesis of HDLs. May interact with APP/A4 amyloid-beta peptide; the interaction is extremely stable in vitro but its physiological significance is unclear. May interact with MAPT. May interact with MAP2. In the cerebrospinal fluid, interacts with secreted SORL1. Interacts with PMEL; this allows the loading of PMEL luminal fragment on ILVs to induce fibril nucleation. APOE exists as multiple glycosylated and sialylated glycoforms within cells and in plasma. The extent of glycosylation and sialylation are tissue and context specific. Post-translationally, glycated in plasma VLDL. In terms of processing, phosphorylated by FAM20C in the extracellular medium.

It localises to the secreted. The protein localises to the extracellular space. The protein resides in the extracellular matrix. Its subcellular location is the extracellular vesicle. It is found in the endosome. It localises to the multivesicular body. APOE is an apolipoprotein, a protein associating with lipid particles, that mainly functions in lipoprotein-mediated lipid transport between organs via the plasma and interstitial fluids. APOE is a core component of plasma lipoproteins and is involved in their production, conversion and clearance. Apolipoproteins are amphipathic molecules that interact both with lipids of the lipoprotein particle core and the aqueous environment of the plasma. As such, APOE associates with chylomicrons, chylomicron remnants, very low density lipoproteins (VLDL) and intermediate density lipoproteins (IDL) but shows a preferential binding to high-density lipoproteins (HDL). It also binds a wide range of cellular receptors including the LDL receptor/LDLR, the LDL receptor-related proteins LRP1, LRP2 and LRP8 and the very low-density lipoprotein receptor/VLDLR that mediate the cellular uptake of the APOE-containing lipoprotein particles. Finally, APOE also has a heparin-binding activity and binds heparan-sulfate proteoglycans on the surface of cells, a property that supports the capture and the receptor-mediated uptake of APOE-containing lipoproteins by cells. A main function of APOE is to mediate lipoprotein clearance through the uptake of chylomicrons, VLDLs, and HDLs by hepatocytes. APOE is also involved in the biosynthesis by the liver of VLDLs as well as their uptake by peripheral tissues ensuring the delivery of triglycerides and energy storage in muscle, heart and adipose tissues. By participating in the lipoprotein-mediated distribution of lipids among tissues, APOE plays a critical role in plasma and tissues lipid homeostasis. APOE is also involved in two steps of reverse cholesterol transport, the HDLs-mediated transport of cholesterol from peripheral tissues to the liver, and thereby plays an important role in cholesterol homeostasis. First, it is functionally associated with ABCA1 in the biogenesis of HDLs in tissues. Second, it is enriched in circulating HDLs and mediates their uptake by hepatocytes. APOE also plays an important role in lipid transport in the central nervous system, regulating neuron survival and sprouting. This Colobus guereza (Mantled guereza) protein is Apolipoprotein E (APOE).